A 461-amino-acid chain; its full sequence is MAPAPSPINSQHVAVIGAGAAGLVAARELRREGHTVVVLDREKQVGGLWVYTPETESDELGLDPTRPIVHSSVYKSLRTNLPRECMGYKDFPFVPRGDDPSRDSRRYPSHREVLAYLQDFATEFNIEEMIRFETEVLRVEPVNGKWRVQSKTGGGFSNDEIYDAVVMCCGHFAEPNIAQIPGIESWPGRQTHSHSYRVPDPFKDEVVVVIGNFASGADISRDISKVAKEVHIASRASKSNTFEKRPVPNNNLWMHSEIDTAHEDGTIVFKNGKVVHADTIVHCTGYKYYFPFLETNNYMRVDDNRVEPLYKHIFPPALAPGLSFIGLPAMGLQFYMFEVQSKWVAAVLSGRVTLPSVDEMMDDLKLSYETQEALGIPKRYTHKLGKSQCEYLDWIADLCGFPHVEHWRDQEVTRGYQRLGNQPETFRDEWDDDDLMEEAYEDFARLNLINFHPSRFLESGR.

FAD is bound at residue 17-22; it reads GAGAAG. 211–216 is a binding site for NADP(+); sequence GNFASG.

This sequence belongs to the FMO family.

It carries out the reaction a (Z)-omega-(methylsulfanyl)-N-sulfo-alkylhydroximate S-glucoside + NADPH + O2 + H(+) = a (Z)-omega-(methylsulfinyl)-alkyl-glucosinolate + NADP(+) + H2O. In terms of biological role, catalyzes the conversion of methylthioalkyl glucosinolates of any chain length into methylsulfinylalkyl glucosinolates. This is Flavin-containing monooxygenase FMO GS-OX4 (FMOGS-OX4) from Arabidopsis thaliana (Mouse-ear cress).